We begin with the raw amino-acid sequence, 588 residues long: ATP-dependent lipid A-core flippase (588 aa).

6 consecutive transmembrane segments (helical) span residues 23-43, 56-76, 141-161, 162-182, 257-277, and 278-298; these read FWPV…IDAG, FITI…IGIT, DALT…TVMM, VICW…GIIV, LVIA…STVI, and TISA…IKPM. Residues 28-310 enclose the ABC transmembrane type-1 domain; the sequence is LLGVLANILY…LTTLNATIQR (283 aa). The ABC transporter domain maps to 342-576; it reads IEFKHVYHAY…DGHYAQLYKV (235 aa). 375–382 contributes to the ATP binding site; that stretch reads GHSGSGKT.

Belongs to the ABC transporter superfamily. Lipid exporter (TC 3.A.1.106) family. Homodimer.

The protein resides in the cell inner membrane. The enzyme catalyses ATP + H2O + lipid A-core oligosaccharideSide 1 = ADP + phosphate + lipid A-core oligosaccharideSide 2.. Involved in lipopolysaccharide (LPS) biosynthesis. Translocates lipid A-core from the inner to the outer leaflet of the inner membrane. Transmembrane domains (TMD) form a pore in the inner membrane and the ATP-binding domain (NBD) is responsible for energy generation. The protein is ATP-dependent lipid A-core flippase of Legionella pneumophila subsp. pneumophila (strain Philadelphia 1 / ATCC 33152 / DSM 7513).